The chain runs to 320 residues: tRNA pseudouridine synthase B (320 aa).

Asp41 acts as the Nucleophile in catalysis. Disordered regions lie at residues 116–136 (PPQV…ARRG) and 259–284 (DQCQ…DPSA). Positions 125-136 (QGERAHARARRG) are enriched in basic and acidic residues. Over residues 270–284 (SDQQESAPNQTDPSA) the composition is skewed to polar residues.

It belongs to the pseudouridine synthase TruB family. Type 1 subfamily.

It carries out the reaction uridine(55) in tRNA = pseudouridine(55) in tRNA. Functionally, responsible for synthesis of pseudouridine from uracil-55 in the psi GC loop of transfer RNAs. The protein is tRNA pseudouridine synthase B of Prochlorococcus marinus (strain MIT 9313).